A 1080-amino-acid polypeptide reads, in one-letter code: Carbamoyl phosphate synthase large chain (1080 aa).

The segment at 1-403 is carboxyphosphate synthetic domain; it reads MPKRTDLKTI…SLQKALRGLE (403 aa). Residues Arg129, Arg169, Gly175, Gly176, Glu208, Val210, Glu215, Gly241, Val242, His243, Gln285, and Glu299 each coordinate ATP. An ATP-grasp 1 domain is found at 133-328; the sequence is RVAMGEIGLD…IAKVAAKLAV (196 aa). Mg(2+) is bound by residues Gln285, Glu299, and Asn301. Gln285, Glu299, and Asn301 together coordinate Mn(2+). An oligomerization domain region spans residues 404–554; sequence TGKIGLDPTG…YSTYEDECEA (151 aa). The tract at residues 555–942 is carbamoyl phosphate synthetic domain; it reads LPSNRDKIMI…AFARAQEAGG (388 aa). Residues 679–876 form the ATP-grasp 2 domain; it reads QQLVDKLGLK…LAKIAARCMA (198 aa). Residues Arg715, Arg754, Leu756, Glu761, Gly787, Val788, His789, Ser790, Gln830, and Glu847 each contribute to the ATP site. Mg(2+) contacts are provided by Gln830, Glu847, and Asn849. The Mn(2+) site is built by Gln830, Glu847, and Asn849. The MGS-like domain occupies 943-1080; that stretch reads IKAPPLGKAF…LQELHKELEA (138 aa). The segment at 943-1080 is allosteric domain; it reads IKAPPLGKAF…LQELHKELEA (138 aa).

Belongs to the CarB family. Composed of two chains; the small (or glutamine) chain promotes the hydrolysis of glutamine to ammonia, which is used by the large (or ammonia) chain to synthesize carbamoyl phosphate. Tetramer of heterodimers (alpha,beta)4. Requires Mg(2+) as cofactor. The cofactor is Mn(2+).

The enzyme catalyses hydrogencarbonate + L-glutamine + 2 ATP + H2O = carbamoyl phosphate + L-glutamate + 2 ADP + phosphate + 2 H(+). It catalyses the reaction hydrogencarbonate + NH4(+) + 2 ATP = carbamoyl phosphate + 2 ADP + phosphate + 2 H(+). Its pathway is amino-acid biosynthesis; L-arginine biosynthesis; carbamoyl phosphate from bicarbonate: step 1/1. It functions in the pathway pyrimidine metabolism; UMP biosynthesis via de novo pathway; (S)-dihydroorotate from bicarbonate: step 1/3. Large subunit of the glutamine-dependent carbamoyl phosphate synthetase (CPSase). CPSase catalyzes the formation of carbamoyl phosphate from the ammonia moiety of glutamine, carbonate, and phosphate donated by ATP, constituting the first step of 2 biosynthetic pathways, one leading to arginine and/or urea and the other to pyrimidine nucleotides. The large subunit (synthetase) binds the substrates ammonia (free or transferred from glutamine from the small subunit), hydrogencarbonate and ATP and carries out an ATP-coupled ligase reaction, activating hydrogencarbonate by forming carboxy phosphate which reacts with ammonia to form carbamoyl phosphate. In Xanthomonas campestris pv. campestris (strain ATCC 33913 / DSM 3586 / NCPPB 528 / LMG 568 / P 25), this protein is Carbamoyl phosphate synthase large chain.